The following is a 196-amino-acid chain: Metalloproteinase inhibitor 2 (196 aa).

The N-terminal stretch at 1–2 (RA) is a signal peptide. Cysteine 3 contacts Zn(2+). Involved in metalloproteinase-binding stretches follow at residues 3-6 (CSCS) and 71-72 (SA). Cystine bridges form between cysteine 3-cysteine 74, cysteine 5-cysteine 103, cysteine 15-cysteine 128, cysteine 130-cysteine 177, cysteine 135-cysteine 140, and cysteine 148-cysteine 169. The region spanning 3–128 (CSCSPVHPQQ…SLNHRYQMGC (126 aa)) is the NTR domain.

Belongs to the protease inhibitor I35 (TIMP) family. As to quaternary structure, interacts (via the C-terminal) with MMP2 (via the C-terminal PEX domain); the interaction inhibits the MMP2 activity. In terms of processing, the activity of TIMP2 is dependent on the presence of disulfide bonds.

The protein resides in the secreted. Complexes with metalloproteinases (such as collagenases) and irreversibly inactivates them by binding to their catalytic zinc cofactor. This Cricetulus longicaudatus (Long-tailed dwarf hamster) protein is Metalloproteinase inhibitor 2 (TIMP2).